Here is a 66-residue protein sequence, read N- to C-terminus: Large ribosomal subunit protein uL29 (66 aa).

It belongs to the universal ribosomal protein uL29 family.

This Pseudothermotoga lettingae (strain ATCC BAA-301 / DSM 14385 / NBRC 107922 / TMO) (Thermotoga lettingae) protein is Large ribosomal subunit protein uL29.